A 468-amino-acid chain; its full sequence is Argininosuccinate lyase (468 aa).

The protein belongs to the lyase 1 family. Argininosuccinate lyase subfamily.

Its subcellular location is the cytoplasm. It catalyses the reaction 2-(N(omega)-L-arginino)succinate = fumarate + L-arginine. The protein operates within amino-acid biosynthesis; L-arginine biosynthesis; L-arginine from L-ornithine and carbamoyl phosphate: step 3/3. This Paraburkholderia phytofirmans (strain DSM 17436 / LMG 22146 / PsJN) (Burkholderia phytofirmans) protein is Argininosuccinate lyase.